Consider the following 98-residue polypeptide: Large ribosomal subunit protein uL23 (98 aa).

Belongs to the universal ribosomal protein uL23 family. Part of the 50S ribosomal subunit. Contacts protein L29, and trigger factor when it is bound to the ribosome.

Functionally, one of the early assembly proteins it binds 23S rRNA. One of the proteins that surrounds the polypeptide exit tunnel on the outside of the ribosome. Forms the main docking site for trigger factor binding to the ribosome. This is Large ribosomal subunit protein uL23 from Cereibacter sphaeroides (strain ATCC 17029 / ATH 2.4.9) (Rhodobacter sphaeroides).